We begin with the raw amino-acid sequence, 1830 residues long: Urea amidolyase (1830 aa).

ATP-binding positions include 115 to 122, Lys740, Glu823, and Asn858; that span reads GAIVIGKT. Residues 625-1068 form the Biotin carboxylation domain; the sequence is PFETVLIANR…ATKILDSYDY (444 aa). An ATP-grasp domain is found at 744-941; that stretch reads REIAEKAGVP…LVEWMLRIAA (198 aa). One can recognise a Biotinyl-binding domain in the interval 1752–1830; it reads AVEEEYPEDA…DAGDLVAVIQ (79 aa). N6-biotinyllysine is present on Lys1796.

The protein belongs to the DUR1,2 family. Monomer. The cofactor is biotin.

It catalyses the reaction urea + hydrogencarbonate + ATP = urea-1-carboxylate + ADP + phosphate + H(+). The enzyme catalyses urea-1-carboxylate + H2O + 3 H(+) = 2 NH4(+) + 2 CO2. Its pathway is nitrogen metabolism; urea degradation; CO(2) and NH(3) from urea (allophanate route): step 1/2. It functions in the pathway nitrogen metabolism; urea degradation; CO(2) and NH(3) from urea (allophanate route): step 2/2. Its function is as follows. Involved in uracil catabolism. Hydrolysis of urea to ammonia and CO(2). The protein is Urea amidolyase (DUR1,2) of Lachancea kluyveri (Yeast).